Consider the following 325-residue polypeptide: Peroxidase 1 (325 aa).

The first 21 residues, 1–21, serve as a signal peptide directing secretion; it reads MAIKNILALVVLLSVVGVSVA. 4 cysteine pairs are disulfide-bonded: Cys-35–Cys-113, Cys-68–Cys-73, Cys-119–Cys-321, and Cys-198–Cys-230. Catalysis depends on His-66, which acts as the Proton acceptor. 5 residues coordinate Ca(2+): Asp-67, Val-70, Gly-72, Asp-74, and Ser-76. Substrate is bound at residue Pro-161. Residue His-191 participates in heme b binding. Residue Thr-192 coordinates Ca(2+). Residue Asn-207 is glycosylated (N-linked (GlcNAc...) asparagine). Residues Asp-242, Ser-245, and Asp-250 each coordinate Ca(2+).

The protein belongs to the peroxidase family. Classical plant (class III) peroxidase subfamily. The cofactor is heme b. Ca(2+) is required as a cofactor. Slightly expressed in roots.

It is found in the secreted. It carries out the reaction 2 a phenolic donor + H2O2 = 2 a phenolic radical donor + 2 H2O. Its function is as follows. Removal of H(2)O(2), oxidation of toxic reductants, biosynthesis and degradation of lignin, suberization, auxin catabolism, response to environmental stresses such as wounding, pathogen attack and oxidative stress. These functions might be dependent on each isozyme/isoform in each plant tissue. The polypeptide is Peroxidase 1 (PER1) (Arabidopsis thaliana (Mouse-ear cress)).